A 123-amino-acid polypeptide reads, in one-letter code: WAP four-disulfide core domain protein 5 (123 aa).

The first 24 residues, 1–24, serve as a signal peptide directing secretion; sequence MRFGRLLLLAVLLAGVSQLPAVSG. 2 consecutive WAP domains span residues 27 to 74 and 75 to 121; these read KGEK…IPRV and SVKL…RDPV. 8 cysteine pairs are disulfide-bonded: Cys34–Cys62, Cys41–Cys66, Cys49–Cys61, Cys55–Cys70, Cys81–Cys109, Cys88–Cys113, Cys96–Cys108, and Cys102–Cys117.

The protein localises to the secreted. Putative acid-stable proteinase inhibitor. This chain is WAP four-disulfide core domain protein 5 (WFDC5), found in Otolemur garnettii (Small-eared galago).